A 120-amino-acid chain; its full sequence is Ribosome-binding factor A (120 aa).

The protein belongs to the RbfA family. As to quaternary structure, monomer. Binds 30S ribosomal subunits, but not 50S ribosomal subunits or 70S ribosomes.

The protein localises to the cytoplasm. In terms of biological role, one of several proteins that assist in the late maturation steps of the functional core of the 30S ribosomal subunit. Associates with free 30S ribosomal subunits (but not with 30S subunits that are part of 70S ribosomes or polysomes). Required for efficient processing of 16S rRNA. May interact with the 5'-terminal helix region of 16S rRNA. This is Ribosome-binding factor A from Clostridium botulinum (strain Loch Maree / Type A3).